The chain runs to 90 residues: Mitochondrial import inner membrane translocase subunit TIM8 (90 aa).

A Twin CX3C motif motif is present at residues 44-70 (CFKKCNANKPITSGTLDSSEEQCLTNC). Cystine bridges form between Cys-44/Cys-70 and Cys-48/Cys-66.

The protein belongs to the small Tim family. In terms of assembly, heterohexamer; composed of 3 copies of TIM8 and 3 copies of TIM13, named soluble 70 kDa complex. Associates with the TIM22 complex, whose core is composed of TIM22 and TIM54. Interacts with the transmembrane regions of multi-pass transmembrane proteins in transit.

It localises to the mitochondrion inner membrane. Mitochondrial intermembrane chaperone that participates in the import and insertion of some multi-pass transmembrane proteins into the mitochondrial inner membrane. Also required for the transfer of beta-barrel precursors from the TOM complex to the sorting and assembly machinery (SAM complex) of the outer membrane. Acts as a chaperone-like protein that protects the hydrophobic precursors from aggregation and guide them through the mitochondrial intermembrane space. The TIM8-TIM13 complex is non essential and only mediates the import of few proteins, while the predominant TIM9-TIM10 70 kDa complex is crucial and mediates the import of much more proteins. This chain is Mitochondrial import inner membrane translocase subunit TIM8 (TIM8), found in Debaryomyces hansenii (strain ATCC 36239 / CBS 767 / BCRC 21394 / JCM 1990 / NBRC 0083 / IGC 2968) (Yeast).